The following is a 392-amino-acid chain: Succinyl-diaminopimelate desuccinylase (392 aa).

A Zn(2+)-binding site is contributed by His-75. Asp-77 is a catalytic residue. A Zn(2+)-binding site is contributed by Asp-108. Residue Glu-147 is the Proton acceptor of the active site. Glu-148, Glu-176, and His-365 together coordinate Zn(2+).

Belongs to the peptidase M20A family. DapE subfamily. In terms of assembly, homodimer. It depends on Zn(2+) as a cofactor. The cofactor is Co(2+).

It carries out the reaction N-succinyl-(2S,6S)-2,6-diaminopimelate + H2O = (2S,6S)-2,6-diaminopimelate + succinate. It functions in the pathway amino-acid biosynthesis; L-lysine biosynthesis via DAP pathway; LL-2,6-diaminopimelate from (S)-tetrahydrodipicolinate (succinylase route): step 3/3. Catalyzes the hydrolysis of N-succinyl-L,L-diaminopimelic acid (SDAP), forming succinate and LL-2,6-diaminopimelate (DAP), an intermediate involved in the bacterial biosynthesis of lysine and meso-diaminopimelic acid, an essential component of bacterial cell walls. The polypeptide is Succinyl-diaminopimelate desuccinylase (Rhodopseudomonas palustris (strain BisB18)).